A 228-amino-acid polypeptide reads, in one-letter code: Geranylgeranylglyceryl phosphate synthase (228 aa).

Lys-14 lines the sn-glycerol 1-phosphate pocket. Mg(2+)-binding residues include Asp-16 and Thr-42. Residues 160-165 (YIEYSG), Gly-190, and 210-211 (GN) each bind sn-glycerol 1-phosphate.

It belongs to the GGGP/HepGP synthase family. Group I subfamily. The cofactor is Mg(2+).

It localises to the cytoplasm. The enzyme catalyses sn-glycerol 1-phosphate + (2E,6E,10E)-geranylgeranyl diphosphate = sn-3-O-(geranylgeranyl)glycerol 1-phosphate + diphosphate. It participates in membrane lipid metabolism; glycerophospholipid metabolism. Prenyltransferase that catalyzes the transfer of the geranylgeranyl moiety of geranylgeranyl diphosphate (GGPP) to the C3 hydroxyl of sn-glycerol-1-phosphate (G1P). This reaction is the first ether-bond-formation step in the biosynthesis of archaeal membrane lipids. The chain is Geranylgeranylglyceryl phosphate synthase from Methanocella arvoryzae (strain DSM 22066 / NBRC 105507 / MRE50).